Here is a 227-residue protein sequence, read N- to C-terminus: 2-C-methyl-D-erythritol 4-phosphate cytidylyltransferase (227 aa).

The protein belongs to the IspD/TarI cytidylyltransferase family. IspD subfamily.

The catalysed reaction is 2-C-methyl-D-erythritol 4-phosphate + CTP + H(+) = 4-CDP-2-C-methyl-D-erythritol + diphosphate. It participates in isoprenoid biosynthesis; isopentenyl diphosphate biosynthesis via DXP pathway; isopentenyl diphosphate from 1-deoxy-D-xylulose 5-phosphate: step 2/6. Its function is as follows. Catalyzes the formation of 4-diphosphocytidyl-2-C-methyl-D-erythritol from CTP and 2-C-methyl-D-erythritol 4-phosphate (MEP). This chain is 2-C-methyl-D-erythritol 4-phosphate cytidylyltransferase, found in Bordetella parapertussis (strain 12822 / ATCC BAA-587 / NCTC 13253).